A 383-amino-acid chain; its full sequence is Acetylornithine deacetylase (383 aa).

Residue H80 coordinates Zn(2+). D82 is an active-site residue. D112 is a binding site for Zn(2+). E144 is a catalytic residue. Positions 145, 169, and 355 each coordinate Zn(2+).

Belongs to the peptidase M20A family. ArgE subfamily. Homodimer. Requires Zn(2+) as cofactor. The cofactor is Co(2+). Glutathione serves as cofactor.

It localises to the cytoplasm. It carries out the reaction N(2)-acetyl-L-ornithine + H2O = L-ornithine + acetate. It participates in amino-acid biosynthesis; L-arginine biosynthesis; L-ornithine from N(2)-acetyl-L-ornithine (linear): step 1/1. In terms of biological role, catalyzes the hydrolysis of the amide bond of N(2)-acetylated L-amino acids. Cleaves the acetyl group from N-acetyl-L-ornithine to form L-ornithine, an intermediate in L-arginine biosynthesis pathway, and a branchpoint in the synthesis of polyamines. The chain is Acetylornithine deacetylase from Salmonella choleraesuis (strain SC-B67).